The sequence spans 153 residues: Suppressor of RNA silencing (153 aa).

Positions 1–23 (MMATFSCVCCGTSTTSTYCGKRC) are C-1. The interaction with TGB1 stretch occupies residues 1-85 (MMATFSCVCC…IVSRFCGQKH (85 aa)). A basic motif (BM) region spans residues 19–47 (CGKRCERKHVYSETRNKRLELYKKYLLEP). A C-2 region spans residues 60–85 (CGMPCSIAEEACDQLPIVSRFCGQKH). An interaction with replication protein alpha-A region spans residues 86-127 (ADLYDSLLKRSEQELLLEFLQKKMQELKLSHIVKMAKLESEV). A coiled-coil region spans residues 92–132 (LLKRSEQELLLEFLQKKMQELKLSHIVKMAKLESEVNAIRK). At Ser96 the chain carries Phosphoserine.

Belongs to the virgaviridae suppressor of RNA silencing family. As to quaternary structure, homooligomer. Interacts (via C-terminus) with replication protein alpha-A. Interacts (via N-terminus) with the movement protein TGB1; this interaction targets gammab-TGB1 at the periphery of chloroplasts and plasmodesmata. Interacts with host autophagy protein ATG7; this interaction disrupts the host ATG7-ATG8 interaction to promote viral infection. Interacts (via BM region) with host STY46; this interaction inhibits the viral infection. In terms of processing, phosphorylated at Ser-96 by a host PKA-like kinase; the phosphorylation at this site seems to suppress host cell death. Serine-phosphorylated by host STY46 kinase.

Its subcellular location is the host chloroplast envelope. It localises to the host endoplasmic reticulum. The protein localises to the host cell junction. It is found in the host plasmodesma. Its function is as follows. Suppressor of RNA-mediated gene silencing, also known as post-transcriptional gene silencing (PTGS), a mechanism of plant viral defense that limits the accumulation of viral RNAs. Promotes viral cell-to-cell long distance movement by enhancing the ATPase activity of TGB1. Enhances RNA helicase activity of replication protein alpha-A. Suppresses autophagy induced by the host as a defense mechanism against viral infection. The protein is Suppressor of RNA silencing of Barley stripe mosaic virus (BSMV).